A 141-amino-acid polypeptide reads, in one-letter code: Large ribosomal subunit protein uL16 (141 aa).

This sequence belongs to the universal ribosomal protein uL16 family. Part of the 50S ribosomal subunit.

Functionally, binds 23S rRNA and is also seen to make contacts with the A and possibly P site tRNAs. The sequence is that of Large ribosomal subunit protein uL16 from Campylobacter lari (strain RM2100 / D67 / ATCC BAA-1060).